The following is a 153-amino-acid chain: Interleukin-4 (153 aa).

A signal peptide spans 1–24 (MGLTSQLLPPLFFLLACAGNFVHG). Disulfide bonds link cysteine 27/cysteine 151, cysteine 48/cysteine 89, and cysteine 70/cysteine 123. Asparagine 62 is a glycosylation site (N-linked (GlcNAc...) asparagine).

The protein belongs to the IL-4/IL-13 family. In terms of assembly, interacts with IL4R. Interacts with IL13RA1.

Its subcellular location is the secreted. Cytokine secreted primarily by mast cells, T-cells, eosinophils, and basophils that plays a role in regulating antibody production, hematopoiesis and inflammation, and the development of effector T-cell responses. Induces the expression of class II MHC molecules on resting B-cells. Enhances both secretion and cell surface expression of IgE and IgG1. Also regulates the expression of the low affinity Fc receptor for IgE (CD23) on both lymphocytes and monocytes. Positively regulates IL31RA expression in macrophages. Stimulates autophagy in dendritic cells by interfering with mTORC1 signaling and through the induction of RUFY4. In addition, plays a critical role in higher functions of the normal brain, such as memory and learning. Upon binding to IL4, IL4R receptor dimerizes either with the common IL2R gamma chain/IL2RG to produce the type 1 signaling complex, located mainly on hematopoietic cells, or with the IL13RA1 to produce the type 2 complex, which is also expressed on nonhematopoietic cells. Engagement of both types of receptors initiates JAK3 and to a lower extend JAK1 phosphorylation leading to activation of the signal transducer and activator of transcription 6/STAT6. The polypeptide is Interleukin-4 (IL4) (Homo sapiens (Human)).